The sequence spans 676 residues: UvrABC system protein C (676 aa).

Residues 16 to 95 (VEPGVYRFRD…IKEFDPRFNI (80 aa)) enclose the GIY-YIG domain. The region spanning 208 to 243 (DRLVRDLERKMTAAAEDLDFERAARLRDDIGALRRA) is the UVR domain.

The protein belongs to the UvrC family. Interacts with UvrB in an incision complex.

The protein resides in the cytoplasm. In terms of biological role, the UvrABC repair system catalyzes the recognition and processing of DNA lesions. UvrC both incises the 5' and 3' sides of the lesion. The N-terminal half is responsible for the 3' incision and the C-terminal half is responsible for the 5' incision. This Mycobacterium sp. (strain KMS) protein is UvrABC system protein C.